Consider the following 123-residue polypeptide: Ribonuclease P protein component (123 aa).

Belongs to the RnpA family. As to quaternary structure, consists of a catalytic RNA component (M1 or rnpB) and a protein subunit.

The catalysed reaction is Endonucleolytic cleavage of RNA, removing 5'-extranucleotides from tRNA precursor.. RNaseP catalyzes the removal of the 5'-leader sequence from pre-tRNA to produce the mature 5'-terminus. It can also cleave other RNA substrates such as 4.5S RNA. The protein component plays an auxiliary but essential role in vivo by binding to the 5'-leader sequence and broadening the substrate specificity of the ribozyme. This Streptococcus pneumoniae (strain Hungary19A-6) protein is Ribonuclease P protein component.